We begin with the raw amino-acid sequence, 159 residues long: Phosphopantetheine adenylyltransferase (159 aa).

This sequence belongs to the eukaryotic CoaD family.

The protein localises to the cytoplasm. The catalysed reaction is (R)-4'-phosphopantetheine + ATP + H(+) = 3'-dephospho-CoA + diphosphate. Its pathway is cofactor biosynthesis; coenzyme A biosynthesis. Its function is as follows. Reversibly transfers an adenylyl group from ATP to 4'-phosphopantetheine, yielding dephospho-CoA (dPCoA) and pyrophosphate. This Thermococcus gammatolerans (strain DSM 15229 / JCM 11827 / EJ3) protein is Phosphopantetheine adenylyltransferase.